The primary structure comprises 72 residues: Protein SlyX homolog (72 aa).

Belongs to the SlyX family.

This chain is Protein SlyX homolog, found in Bradyrhizobium diazoefficiens (strain JCM 10833 / BCRC 13528 / IAM 13628 / NBRC 14792 / USDA 110).